Reading from the N-terminus, the 357-residue chain is UPF0283 membrane protein HSM_0945 (357 aa).

3 consecutive transmembrane segments (helical) span residues 67-87 (LMAT…QWLV), 96-116 (IAFV…GTII), and 213-233 (AVES…MFFI).

This sequence belongs to the UPF0283 family.

It localises to the cell inner membrane. In Histophilus somni (strain 2336) (Haemophilus somnus), this protein is UPF0283 membrane protein HSM_0945.